The chain runs to 204 residues: ATP-dependent Clp protease proteolytic subunit (204 aa).

The active-site Nucleophile is the Ser102. Residue His127 is part of the active site.

It belongs to the peptidase S14 family. In terms of assembly, fourteen ClpP subunits assemble into 2 heptameric rings which stack back to back to give a disk-like structure with a central cavity, resembling the structure of eukaryotic proteasomes.

The protein resides in the cytoplasm. It carries out the reaction Hydrolysis of proteins to small peptides in the presence of ATP and magnesium. alpha-casein is the usual test substrate. In the absence of ATP, only oligopeptides shorter than five residues are hydrolyzed (such as succinyl-Leu-Tyr-|-NHMec, and Leu-Tyr-Leu-|-Tyr-Trp, in which cleavage of the -Tyr-|-Leu- and -Tyr-|-Trp bonds also occurs).. In terms of biological role, cleaves peptides in various proteins in a process that requires ATP hydrolysis. Has a chymotrypsin-like activity. Plays a major role in the degradation of misfolded proteins. The polypeptide is ATP-dependent Clp protease proteolytic subunit (Neisseria meningitidis serogroup C (strain 053442)).